Consider the following 605-residue polypeptide: Probable potassium transport system protein Kup 1 (605 aa).

A run of 12 helical transmembrane segments spans residues 16–36 (ALGL…TVIF), 46–66 (VFGI…MEYA), 97–117 (VAFA…DGVI), 138–158 (GLST…LFSV), 166–186 (VAGA…VTGV), 212–232 (GLAG…GEAL), 248–268 (WYFV…FAIT), 287–307 (LYIP…QSII), 339–359 (IYLG…MLLF), 368–388 (AYGM…IIVF), 397–417 (ALVA…TFSK), and 418–438 (IPHG…TIII).

Belongs to the HAK/KUP transporter (TC 2.A.72) family.

The protein localises to the cell inner membrane. It catalyses the reaction K(+)(in) + H(+)(in) = K(+)(out) + H(+)(out). Its function is as follows. Transport of potassium into the cell. Likely operates as a K(+):H(+) symporter. This chain is Probable potassium transport system protein Kup 1, found in Geobacter metallireducens (strain ATCC 53774 / DSM 7210 / GS-15).